We begin with the raw amino-acid sequence, 109 residues long: Class I hydrophobin 2 (109 aa).

Positions 1 to 18 (MQFKLAFVSIALATLAVA) are cleaved as a signal peptide. Cystine bridges form between C30/C90, C37/C84, C38/C71, and C91/C104.

This sequence belongs to the fungal hydrophobin family. As to quaternary structure, self-assembles to form functional amyloid fibrils called rodlets. Self-assembly into fibrillar rodlets occurs spontaneously at hydrophobic:hydrophilic interfaces and the rodlets further associate laterally to form amphipathic monolayers.

The protein localises to the secreted. It is found in the cell wall. Functionally, aerial growth, conidiation, and dispersal of filamentous fungi in the environment rely upon a capability of their secreting small amphipathic proteins called hydrophobins (HPBs) with low sequence identity. Class I can self-assemble into an outermost layer of rodlet bundles on aerial cell surfaces, conferring cellular hydrophobicity that supports fungal growth, development and dispersal; whereas Class II form highly ordered films at water-air interfaces through intermolecular interactions but contribute nothing to the rodlet structure. Hyd2 is a class I hydrophobin that may allow the dikaryotic mycelia to attach to the hydrophobic surface of the substrate. Higher expression in dikaryotic mycelia than in monokaryotic mycelia indicates that dikaryons require more hyd2 hydrophobin than the monokaryons, presumably for a higher rate of hyphal growth. This is Class I hydrophobin 2 from Lentinula edodes (Shiitake mushroom).